Reading from the N-terminus, the 270-residue chain is Formamidopyrimidine-DNA glycosylase (270 aa).

Proline 2 functions as the Schiff-base intermediate with DNA in the catalytic mechanism. Glutamate 3 (proton donor) is an active-site residue. Lysine 58 functions as the Proton donor; for beta-elimination activity in the catalytic mechanism. Positions 91, 110, and 151 each coordinate DNA. The segment at phenylalanine 236 to arginine 270 adopts an FPG-type zinc-finger fold. Catalysis depends on arginine 260, which acts as the Proton donor; for delta-elimination activity.

Belongs to the FPG family. Monomer. The cofactor is Zn(2+).

The catalysed reaction is Hydrolysis of DNA containing ring-opened 7-methylguanine residues, releasing 2,6-diamino-4-hydroxy-5-(N-methyl)formamidopyrimidine.. The enzyme catalyses 2'-deoxyribonucleotide-(2'-deoxyribose 5'-phosphate)-2'-deoxyribonucleotide-DNA = a 3'-end 2'-deoxyribonucleotide-(2,3-dehydro-2,3-deoxyribose 5'-phosphate)-DNA + a 5'-end 5'-phospho-2'-deoxyribonucleoside-DNA + H(+). Involved in base excision repair of DNA damaged by oxidation or by mutagenic agents. Acts as a DNA glycosylase that recognizes and removes damaged bases. Has a preference for oxidized purines, such as 7,8-dihydro-8-oxoguanine (8-oxoG). Has AP (apurinic/apyrimidinic) lyase activity and introduces nicks in the DNA strand. Cleaves the DNA backbone by beta-delta elimination to generate a single-strand break at the site of the removed base with both 3'- and 5'-phosphates. The protein is Formamidopyrimidine-DNA glycosylase of Pseudomonas putida (strain W619).